The sequence spans 358 residues: Probable undecaprenyl-phosphate N-acetylglucosaminyl 1-phosphate transferase (358 aa).

11 helical membrane-spanning segments follow: residues 10–32, 53–72, 76–93, 105–127, 137–157, 164–181, 186–205, 218–235, 240–262, 292–311, and 316–338; these read VVAF…RIAI, MGGL…SGIY, RMTA…LGIL, FLIQ…FFSV, GWMA…AINL, LAAG…VMAL, VLIL…FLFY, GSLF…LGLY, LFSI…FAII, MSVL…AIVL, and IWLS…EVTG.

Belongs to the glycosyltransferase 4 family. Mg(2+) serves as cofactor. Mn(2+) is required as a cofactor.

The protein resides in the cell membrane. The catalysed reaction is di-trans,octa-cis-undecaprenyl phosphate + UDP-N-acetyl-alpha-D-glucosamine = N-acetyl-alpha-D-glucosaminyl-di-trans,octa-cis-undecaprenyl diphosphate + UMP. The protein operates within cell wall biogenesis; poly(glucopyranosyl N-acetylgalactosamine 1-phosphate) teichoic acid biosynthesis. Its pathway is cell wall biogenesis; poly(glycerol phosphate) teichoic acid biosynthesis. Catalyzes the formation of undecaprenyl-PP-N-acetylglucosamine. Involved in the synthesis of anionic cell-wall polymers as it mediates the initiation of the linkage unit formation that appears to be common to the two types of teichoic acids attached to the peptidoglycan of B.subtilis; may also be involved in teichuronic acid biosynthesis. This chain is Probable undecaprenyl-phosphate N-acetylglucosaminyl 1-phosphate transferase (tagO), found in Bacillus subtilis (strain 168).